We begin with the raw amino-acid sequence, 432 residues long: 3-phosphoshikimate 1-carboxyvinyltransferase (432 aa).

Lysine 23, serine 24, and arginine 28 together coordinate 3-phosphoshikimate. Lysine 23 lines the phosphoenolpyruvate pocket. The phosphoenolpyruvate site is built by glycine 96 and arginine 125. 3-phosphoshikimate-binding residues include serine 170, glutamine 172, aspartate 318, and lysine 345. Residue glutamine 172 coordinates phosphoenolpyruvate. Aspartate 318 functions as the Proton acceptor in the catalytic mechanism. Positions 349 and 391 each coordinate phosphoenolpyruvate.

It belongs to the EPSP synthase family. As to quaternary structure, monomer.

Its subcellular location is the cytoplasm. It carries out the reaction 3-phosphoshikimate + phosphoenolpyruvate = 5-O-(1-carboxyvinyl)-3-phosphoshikimate + phosphate. It participates in metabolic intermediate biosynthesis; chorismate biosynthesis; chorismate from D-erythrose 4-phosphate and phosphoenolpyruvate: step 6/7. Functionally, catalyzes the transfer of the enolpyruvyl moiety of phosphoenolpyruvate (PEP) to the 5-hydroxyl of shikimate-3-phosphate (S3P) to produce enolpyruvyl shikimate-3-phosphate and inorganic phosphate. The protein is 3-phosphoshikimate 1-carboxyvinyltransferase of Gloeobacter violaceus (strain ATCC 29082 / PCC 7421).